We begin with the raw amino-acid sequence, 440 residues long: 6-phospho-alpha-glucosidase (440 aa).

Residue 4-70 coordinates NAD(+); that stretch reads FSIVVAGGGS…PDINFVYTTD (67 aa). R93 and N147 together coordinate substrate. C169 lines the Mn(2+) pocket. D170 functions as the Proton donor in the catalytic mechanism. H200 contacts Mn(2+). Catalysis depends on Y263, which acts as the Proton acceptor. R283 serves as a coordination point for substrate.

This sequence belongs to the glycosyl hydrolase 4 family. Homodimer. It depends on NAD(+) as a cofactor. Requires Mn(2+) as cofactor.

The protein operates within glycan degradation; palatinose degradation. Functionally, in vitro, readily hydrolyzes p-nitrophenyl-alpha-D-glucopyranoside 6-phosphate (pNPalphaG6P), a chromogenic analog of the phosphorylated isomers of sucrose. In vivo, is probably involved in the degradation of the 6-phosphate derivatives of the sucrose isomers trehalulose, turanose, maltulose and palatinose, catalyzing their hydrolysis into glucose 6-phosphate (G6P) and fructose, which allows the bacterium to use these sugars as energy sources for growth. Is not able to hydrolyze the C2 or C4 chromogenic stereomers (i.e. pNPalpha-mannopyranoside-6P and pNPalpha-galactopyranoside-6P, respectively). The polypeptide is 6-phospho-alpha-glucosidase (pagL) (Leptotrichia buccalis (strain ATCC 14201 / DSM 1135 / JCM 12969 / NCTC 10249 / C-1013-b)).